The primary structure comprises 345 residues: Methionine import ATP-binding protein MetN (345 aa).

Residues 2–241 (IKLNNITKIF…PKTELAQEFI (240 aa)) form the ABC transporter domain. 38–45 (GASGAGKS) is an ATP binding site.

It belongs to the ABC transporter superfamily. Methionine importer (TC 3.A.1.24) family. The complex is composed of two ATP-binding proteins (MetN), two transmembrane proteins (MetI) and a solute-binding protein (MetQ).

The protein localises to the cell inner membrane. It catalyses the reaction L-methionine(out) + ATP + H2O = L-methionine(in) + ADP + phosphate + H(+). The enzyme catalyses D-methionine(out) + ATP + H2O = D-methionine(in) + ADP + phosphate + H(+). Functionally, part of the ABC transporter complex MetNIQ involved in methionine import. Responsible for energy coupling to the transport system. The chain is Methionine import ATP-binding protein MetN from Haemophilus influenzae (strain 86-028NP).